Here is a 470-residue protein sequence, read N- to C-terminus: Glutamate--tRNA ligase (470 aa).

Residues Pro-9–Gly-19 carry the 'HIGH' region motif. Positions Arg-236–Arg-240 match the 'KMSKS' region motif. Residue Lys-239 participates in ATP binding.

It belongs to the class-I aminoacyl-tRNA synthetase family. Glutamate--tRNA ligase type 1 subfamily. In terms of assembly, monomer.

The protein resides in the cytoplasm. It catalyses the reaction tRNA(Glu) + L-glutamate + ATP = L-glutamyl-tRNA(Glu) + AMP + diphosphate. Functionally, catalyzes the attachment of glutamate to tRNA(Glu) in a two-step reaction: glutamate is first activated by ATP to form Glu-AMP and then transferred to the acceptor end of tRNA(Glu). This is Glutamate--tRNA ligase from Legionella pneumophila subsp. pneumophila (strain Philadelphia 1 / ATCC 33152 / DSM 7513).